A 1058-amino-acid chain; its full sequence is MPKRKDIQKIMVIGSGPIIIGQAAEFDYAGTQACLALKEEGYKVILVNSNPATIMTDKEIADKVYIEPLTLEFVNRIIRKERPDAILPTLGGQTGLNMAMALSKAGILDDLEIELLGTKLSAIDQAEDRDLFKQLMQELDQPIPESTIVKTVDEAVTFARDIGYPVIVRPAFTLGGTGGGICSSEEELCEITENGLKLSPVTQCLIERSIAGFKEIEYEVMRDSADNALVVCNMENFDPVGIHTGDSIVFAPTQTLSDIENQMLRDASLKIIRALKIEGGCNVQLALDPYSFKYYVIEVNPRVSRSSALASKATGYPIAKLAAKIAVGLTLDEMINPITGTTYAMFEPALDYVVAKIPRFPFDKFEHGERQLGTQMKATGEVMAIGRNLEESLLKACRSLEIGVCHNEMTSLSNISDEELVTKVIKAQDDRLFYLSEAIRRGYSIEELESLTKIDLFFLDKLLHIVEIEQELQMHVDHLESLKKAKRYGFSDQKIAEIWQKDESDIRAMRHSHSLYPVYKMVDTCAAEFDAKTPYFYSTYELENESVQSNKESILVLGSGPIRIGQGVEFDYATVHSVKAIQKAGYEAIIMNSNPETVSTDFSVSDKLYFEPLTFEDVMNVIDLEQPKGVIVQFGGQTAINLAQALSEAGVTILGTQVEDLDRAEDRDLFEKALKELGIPQPQGQTATNEEEALEAAKKIGFPVLVRPSYVLGGRAMEIVENKEDLREYIRTAVKASPEHPILVDSYIFGKECEVDAISDGKSVLIPGIMEHIERAGVHSGDSMAVYPPQQLSKQIQETIAEYTKRLAIGLNCIGMMNVQFVIKNEQVYVIEVNPRASRTVPFLSKVTGIPMAQIATKLILGQTLKDLGYEDGLYPQSPLVHIKAPVFSFTKLAQVDSLLGPEMKSTGEVMGSDTSLEKALYKAFEANNSHLSEFGQIVFTIADDSKAEALSLARRFKAIGYQIMATQGTAAYFAEQGLSACLVGKIGDAANDIPTLVRHGHVQAIVNTVGIKRTADKDGQMIRSSAIEQGVPLFTALDTAKAMLTVLESRCFNIEAI.

The carboxyphosphate synthetic domain stretch occupies residues 1–401 (MPKRKDIQKI…SLLKACRSLE (401 aa)). Residues Arg129, Arg169, Gly175, Gly176, Arg208, Ile210, Glu215, Gly241, Ile242, His243, Gln284, and Glu298 each coordinate ATP. An ATP-grasp 1 domain is found at 133 to 327 (KQLMQELDQP…IAKLAAKIAV (195 aa)). Mg(2+) is bound by residues Gln284, Glu298, and Asn300. Mn(2+) is bound by residues Gln284, Glu298, and Asn300. The oligomerization domain stretch occupies residues 402–546 (IGVCHNEMTS…YSTYELENES (145 aa)). Residues 547–929 (VQSNKESILV…ALYKAFEANN (383 aa)) are carbamoyl phosphate synthetic domain. Residues 671 to 861 (EKALKELGIP…MAQIATKLIL (191 aa)) enclose the ATP-grasp 2 domain. Positions 707, 746, 748, 752, 777, 778, 779, 780, 820, and 832 each coordinate ATP. The Mg(2+) site is built by Gln820, Glu832, and Asn834. Gln820, Glu832, and Asn834 together coordinate Mn(2+). The 129-residue stretch at 930-1058 (SHLSEFGQIV…ESRCFNIEAI (129 aa)) folds into the MGS-like domain. The segment at 930-1058 (SHLSEFGQIV…ESRCFNIEAI (129 aa)) is allosteric domain.

The protein belongs to the CarB family. In terms of assembly, composed of two chains; the small (or glutamine) chain promotes the hydrolysis of glutamine to ammonia, which is used by the large (or ammonia) chain to synthesize carbamoyl phosphate. Tetramer of heterodimers (alpha,beta)4. Mg(2+) serves as cofactor. Requires Mn(2+) as cofactor.

It carries out the reaction hydrogencarbonate + L-glutamine + 2 ATP + H2O = carbamoyl phosphate + L-glutamate + 2 ADP + phosphate + 2 H(+). The enzyme catalyses hydrogencarbonate + NH4(+) + 2 ATP = carbamoyl phosphate + 2 ADP + phosphate + 2 H(+). Its pathway is amino-acid biosynthesis; L-arginine biosynthesis; carbamoyl phosphate from bicarbonate: step 1/1. It functions in the pathway pyrimidine metabolism; UMP biosynthesis via de novo pathway; (S)-dihydroorotate from bicarbonate: step 1/3. In terms of biological role, large subunit of the glutamine-dependent carbamoyl phosphate synthetase (CPSase). CPSase catalyzes the formation of carbamoyl phosphate from the ammonia moiety of glutamine, carbonate, and phosphate donated by ATP, constituting the first step of 2 biosynthetic pathways, one leading to arginine and/or urea and the other to pyrimidine nucleotides. The large subunit (synthetase) binds the substrates ammonia (free or transferred from glutamine from the small subunit), hydrogencarbonate and ATP and carries out an ATP-coupled ligase reaction, activating hydrogencarbonate by forming carboxy phosphate which reacts with ammonia to form carbamoyl phosphate. This chain is Carbamoyl phosphate synthase large chain, found in Streptococcus pyogenes serotype M1.